Here is a 474-residue protein sequence, read N- to C-terminus: JmjC domain-containing protein F (474 aa).

A disordered region spans residues 247–269; it reads KTKKQQQQQQTTTTTANNDNDNS. A compositionally biased stretch (low complexity) spans 251-261; that stretch reads QQQQQQTTTTT. The JmjC domain occupies 305–474; it reads AYLAQHGLIE…LSLSFWFIKK (170 aa).

The polypeptide is JmjC domain-containing protein F (jcdF) (Dictyostelium discoideum (Social amoeba)).